A 276-amino-acid polypeptide reads, in one-letter code: Glyoxal reductase (276 aa).

Tyr54 functions as the Proton donor in the catalytic mechanism. His112 serves as a coordination point for substrate. An NADP(+)-binding site is contributed by 190 to 242; the sequence is SPLMQGQLLDNEVLTQIAEKHNKSVAQVILRWDLQHGVVTIPKSIKEHRIIEN.

This sequence belongs to the aldo/keto reductase family.

It catalyses the reaction (S)-lactaldehyde + NADP(+) = methylglyoxal + NADPH + H(+). Functionally, reduces glyoxal and methylglyoxal (2-oxopropanal). Is not involved in the vitamin B6 biosynthesis. This is Glyoxal reductase (yvgN) from Bacillus subtilis (strain 168).